The primary structure comprises 126 residues: C-type natriuretic peptide 2 (126 aa).

Residues 1 to 22 (MAVCSSSSLILLTVFLSVAVET) form the signal peptide. Residues 23–102 (RPSSDRDEEQ…REKTRRWGRK (80 aa)) constitute a propeptide that is removed on maturation. Positions 44–80 (SLILAPPTSNDSTEGSSGSPEPPTPSEAPVLIHGDRG) are disordered. Cys-110 and Cys-126 are disulfide-bonded.

This sequence belongs to the natriuretic peptide family. Brain and spinal cord.

The protein resides in the secreted. In terms of biological role, exhibits natriuretic and vasodepressant activity. Has cGMP-stimulating activity. May help to regulate body fluid homeostasis in a variety of aquatic environments. The protein is C-type natriuretic peptide 2 of Oryzias latipes (Japanese rice fish).